Reading from the N-terminus, the 669-residue chain is Polyamine deacetylase HDAC10 (669 aa).

The tract at residues 1 to 323 (MGTALVYHED…VCMTVQTLLG (323 aa)) is histone deacetylase. Asp20 provides a ligand contact to substrate. The Substrate specificity signature appears at 21–24 (PECE). Catalysis depends on His135, which acts as the Proton donor/acceptor. Asp172, His174, and Asp265 together coordinate Zn(2+). Tyr305 contributes to the substrate binding site. The segment covering 361–373 (DVTAVPMSPSSHS) has biased composition (polar residues). The segment at 361–387 (DVTAVPMSPSSHSPEGRPPPLLPGGPV) is disordered. Ser393 carries the phosphoserine modification.

This sequence belongs to the histone deacetylase family. HD type 2 subfamily. As to quaternary structure, interacts with HDAC3. Interacts with HDAC2 and NCOR2/SMRT. Interacts with HSPA8/HSC70. Interacts with MSH2. Widely expressed with high levels in liver and kidney.

Its subcellular location is the cytoplasm. The protein localises to the nucleus. It catalyses the reaction N(8)-acetylspermidine + H2O = spermidine + acetate. It carries out the reaction N-acetylputrescine + H2O = putrescine + acetate. The catalysed reaction is N-acetylcadaverine + H2O = cadaverine + acetate. The enzyme catalyses N(6)-acetyl-L-lysyl-[protein] + H2O = L-lysyl-[protein] + acetate. Polyamine deacetylase (PDAC), which acts preferentially on N(8)-acetylspermidine, and also on acetylcadaverine and acetylputrescine. Exhibits attenuated catalytic activity toward N(1),N(8)-diacetylspermidine and very low activity, if any, toward N(1)-acetylspermidine. Histone deacetylase activity has been observed in vitro. Has also been shown to be involved in MSH2 deacetylation. The physiological relevance of protein/histone deacetylase activity is unclear and could be very weak. May play a role in the promotion of late stages of autophagy, possibly autophagosome-lysosome fusion and/or lysosomal exocytosis in neuroblastoma cells. May play a role in homologous recombination. May promote DNA mismatch repair. This Homo sapiens (Human) protein is Polyamine deacetylase HDAC10 (HDAC10).